We begin with the raw amino-acid sequence, 47 residues long: Large ribosomal subunit protein eL40 (47 aa).

The protein belongs to the eukaryotic ribosomal protein eL40 family.

The polypeptide is Large ribosomal subunit protein eL40 (Methanococcus maripaludis (strain C5 / ATCC BAA-1333)).